Here is a 437-residue protein sequence, read N- to C-terminus: Matrix remodeling-associated protein 8 (437 aa).

The signal sequence occupies residues 1 to 22 (MEQLAKLLLWQLLLQQSSVVYL). At 23-339 (YSVPADASNP…PESRIHFFQQ (317 aa)) the chain is on the extracellular side. Ig-like V-type domains lie at 32–159 (PDSV…LDIT) and 167–294 (EYWD…VFVT). 4 N-linked (GlcNAc...) asparagine glycosylation sites follow: asparagine 41, asparagine 121, asparagine 246, and asparagine 304. Intrachain disulfides connect cysteine 54–cysteine 139 and cysteine 188–cysteine 274. Residues 340–360 (LGYVLATLLLFVVLLIIVVFI) traverse the membrane as a helical segment. Topologically, residues 361-437 (TRKRRQRGYE…DKDFRKEYCK (77 aa)) are cytoplasmic.

As to quaternary structure, homodimer in cis. Does not appear to form trans-homodimers.

The protein resides in the cell membrane. Its function is as follows. Transmembrane protein which can modulate activity of various signaling pathways, probably via binding to integrin ITGAV:ITGB3. Mediates heterophilic cell-cell interactions in vitro. The chain is Matrix remodeling-associated protein 8 (MXRA8) from Gallus gallus (Chicken).